Consider the following 289-residue polypeptide: F-box protein PP2-B15 (289 aa).

The 43-residue stretch at 1-43 folds into the F-box domain; it reads MMLPEACVATILSFTTPADTISSAAVSSVFRVAGDSDFVWEKF.

This chain is F-box protein PP2-B15 (PP2B15), found in Arabidopsis thaliana (Mouse-ear cress).